We begin with the raw amino-acid sequence, 157 residues long: Transcriptional repressor NrdR (157 aa).

A zinc finger spans residues 3-34 (CPKCNSTHSRVVDSRHADEANAIRRRRECENC). In terms of domain architecture, ATP-cone spans 49–139 (LIVVKKDGTR…VYKEFKDVDQ (91 aa)).

The protein belongs to the NrdR family. Requires Zn(2+) as cofactor.

Negatively regulates transcription of bacterial ribonucleotide reductase nrd genes and operons by binding to NrdR-boxes. The sequence is that of Transcriptional repressor NrdR from Staphylococcus carnosus (strain TM300).